We begin with the raw amino-acid sequence, 321 residues long: Olfactory receptor 52P1 (321 aa).

At 1–27 the chain is on the extracellular side; sequence MESPNHTDVDPSVFFLLGIPGLEQFHL. An N-linked (GlcNAc...) asparagine glycan is attached at Asn5. A helical membrane pass occupies residues 28 to 48; it reads WLSLPVCGLGTATIVGNITIL. The Cytoplasmic segment spans residues 49 to 56; it reads VVVATEPV. The helical transmembrane segment at 57–77 threads the bilayer; that stretch reads LHKPVYLFLCMLSTIDLAASV. Over 78–101 the chain is Extracellular; the sequence is STVPKLLAIFWCGAGHISASACLA. A disulfide bridge links Cys99 with Cys191. The helical transmembrane segment at 102 to 122 threads the bilayer; sequence QMFFIHAFCMMESTVLLAMAF. Over 123-141 the chain is Cytoplasmic; sequence DRYVAICHPLRYATILTDT. A helical transmembrane segment spans residues 142–162; it reads IIAHIGVAAVVRGSLLMLPCP. The Extracellular segment spans residues 163–198; the sequence is FLIGRLNFCQSHVILHTYCEHMAVVKLACGDTRPNR. Residues 199–219 traverse the membrane as a helical segment; that stretch reads VYGLTAALLVIGVDLFCIGLS. Residues 220–239 lie on the Cytoplasmic side of the membrane; it reads YALSAQAVLRLSSHEARSKA. Residues 240-260 form a helical membrane-spanning segment; it reads LGTCGSHVCVILISYTPALFS. Topologically, residues 261–275 are extracellular; sequence FFTHRFGHHVPVHIH. A helical membrane pass occupies residues 276–296; the sequence is ILLANVYLLLPPALNPVVYGV. The Cytoplasmic portion of the chain corresponds to 297–315; that stretch reads KTKQIRKRVVRVFQSGQGM.

It belongs to the G-protein coupled receptor 1 family.

The protein resides in the cell membrane. Functionally, odorant receptor. This chain is Olfactory receptor 52P1, found in Homo sapiens (Human).